The primary structure comprises 83 residues: RNA-binding protein Hfq (83 aa).

Residues 10–69 form the Sm domain; that stretch reads DPFLNALRREHVPVSIYLVNGIKLQGQIESFDQYVVLLRNTVTQMVYKHAISTIVPGRAV.

The protein belongs to the Hfq family. Homohexamer.

RNA chaperone that binds small regulatory RNA (sRNAs) and mRNAs to facilitate mRNA translational regulation in response to envelope stress, environmental stress and changes in metabolite concentrations. Also binds with high specificity to tRNAs. This chain is RNA-binding protein Hfq, found in Paracidovorax citrulli (strain AAC00-1) (Acidovorax citrulli).